The primary structure comprises 743 residues: Beta-galactosidase (743 aa).

E388 acts as the Proton donor in catalysis. Residue E453 is the Nucleophile of the active site.

The protein belongs to the glycosyl hydrolase 2 family. As to quaternary structure, homodimer.

It catalyses the reaction Hydrolysis of terminal non-reducing beta-D-galactose residues in beta-D-galactosides.. Functionally, beta-galactosidase. The chain is Beta-galactosidase (lacZ) from Thermoanaerobacter pseudethanolicus (strain ATCC 33223 / 39E) (Clostridium thermohydrosulfuricum).